The primary structure comprises 607 residues: MAEHKLRKRKTSRYDDEVIYAAKFLYLKKYTPKEIAEELGLNSRRPIYYWAEKYNWRNLLSESGIEELIALRIITLTERENKSDQEIKELEALIDKDIQYKKQRAATVAKVTAKSAVNSADVSGNERAFADSGDGDERKKKKRVKNDISHVTPEMCQPFIDSLFDYQKHIRSNKHHDVRNILKSRQIGATYYFSFEALEDAIFSGDNQIFLSASKRQAEIFKNYIVKMAREYFGVELTGNPIILSNGAELHFLSTNKNTSQGNSGHVYGDEYAWIRDFQRFDDVASAMATHEKWRETYFSTPSSKFHESYSFWSGDNWRDGDPKRKNVPFPTFAELRDGGRLCPDGQWRYVVTIEDALKGGADKLFNIEKLKQRYSKYAFNQLYMCIWIDDADSIFNVKQLLKCGVDIAKWKDFNPKADRPFGDREVWGGFDPAHSGDGASFVIIAPPALPGEKYRMLARYQWHGLSYVYQANQIRALYEKYNMTYIGIDATGVGYGVYELVKEFARRAATAIIYNPESKTGMVLKVHDLVEHGQIEWSESELDIVPSFLMIKHQSTKSGNTMTFTAERTVKTQHADVFFAICNAINKKSLSDKPRKRRRWSVLNEN.

The protein to phage P2 protein P.

In Haemophilus phage HP1 (strain HP1c1) (Bacteriophage HP1), this protein is Probable terminase, ATPase subunit.